The sequence spans 2201 residues: Genome polyprotein (2201 aa).

Residue Gly-2 is the site of N-myristoyl glycine; by host attachment. Topologically, residues 2–1511 (GAQVSTQKTG…YVSRAFICLQ (1510 aa)) are cytoplasmic. The tract at residues 566–582 (KLQGDVEEAIERARCTV) is amphipathic alpha-helix. Residues 858–860 (RGD) carry the Cell attachment site motif. Catalysis depends on for protease 2A activity residues His-888 and Asp-906. 2 residues coordinate Zn(2+): Cys-923 and Cys-925. Catalysis depends on Cys-977, which acts as the For protease 2A activity. Positions 983 and 985 each coordinate Zn(2+). Positions 1117-1189 (NDSWLKKFTE…EQSAPSQSDQ (73 aa)) are membrane-binding. Positions 1117 to 1255 (NDSWLKKFTE…SPGAGKSVAT (139 aa)) are oligomerization. The tract at residues 1138–1142 (AIKIQ) is RNA-binding. The SF3 helicase domain maps to 1221–1377 (EKKMSNYIQF…SMYSQNGKIN (157 aa)). Zn(2+) is bound by residues Cys-1385, Cys-1397, and Cys-1402. The C4-type; degenerate zinc finger occupies 1385 to 1402 (CDEECCPVNFKKCCPLVC). The interval 1429–1436 (EYNHRHSV) is RNA-binding. The segment at 1440–1445 (LEALFQ) is oligomerization. The stretch at 1512–1527 (AITTFVSVAGIIYIIY) is an intramembrane region. The Cytoplasmic segment spans residues 1528–2201 (KLFAGFQGAY…TLRRKWLDSF (674 aa)). The residue at position 1537 (Tyr-1537) is an O-(5'-phospho-RNA)-tyrosine. Positions 1557-1735 (GPAFEFAVAM…FSAALLKHYF (179 aa)) constitute a Peptidase C3 domain. Active-site for protease 3C activity residues include His-1596, Glu-1627, and Cys-1703. A RdRp catalytic domain is found at 1966 to 2082 (GHLIAFDYSG…SYPWPIDASL (117 aa)). The Mg(2+) site is built by Asp-1972 and Asp-2068.

It belongs to the picornaviruses polyprotein family. As to quaternary structure, interacts with capsid protein VP1 and capsid protein VP3 to form heterotrimeric protomers. Interacts with capsid protein VP0, and capsid protein VP3 to form heterotrimeric protomers. Five protomers subsequently associate to form pentamers which serve as building blocks for the capsid. Interacts with capsid protein VP2, capsid protein VP3 and capsid protein VP4 following cleavage of capsid protein VP0. Interacts with host integrin heterodimer ITGAV/ITGB6. In terms of assembly, interacts with capsid protein VP1 and capsid protein VP3 in the mature capsid. As to quaternary structure, interacts with capsid protein VP0 and capsid protein VP1 to form heterotrimeric protomers. Five protomers subsequently associate to form pentamers which serve as building blocks for the capsid. Interacts with capsid protein VP4 in the mature capsid. Interacts with protein 2C; this interaction may be important for virion morphogenesis. Interacts with capsid protein VP1 and capsid protein VP3. In terms of assembly, homodimer. As to quaternary structure, homohexamer; forms a hexameric ring structure with 6-fold symmetry characteristic of AAA+ ATPases. Interacts (via N-terminus) with host RTN3 (via reticulon domain); this interaction is important for viral replication. Interacts with capsid protein VP3; this interaction may be important for virion morphogenesis. Interacts with protein 3CD. In terms of assembly, homodimer. Interacts with host GBF1. Interacts (via GOLD domain) with host ACBD3 (via GOLD domain); this interaction allows the formation of a viral protein 3A/ACBD3 heterotetramer with a 2:2 stoichiometry, which will stimulate the recruitment of host PI4KB in order to synthesize PI4P at the viral RNA replication sites. As to quaternary structure, interacts with RNA-directed RNA polymerase. Interacts with protein 3AB and with RNA-directed RNA polymerase. In terms of assembly, interacts with Viral protein genome-linked and with protein 3CD. The cofactor is Mg(2+). Post-translationally, specific enzymatic cleavages in vivo by the viral proteases yield processing intermediates and the mature proteins. Myristoylation is required for the formation of pentamers during virus assembly. Further assembly of 12 pentamers and a molecule of genomic RNA generates the provirion. In terms of processing, during virion maturation, immature virions are rendered infectious following cleavage of VP0 into VP4 and VP2. This maturation seems to be an autocatalytic event triggered by the presence of RNA in the capsid and it is followed by a conformational change infectious virion. Post-translationally, myristoylation is required during RNA encapsidation and formation of the mature virus particle. VPg is uridylylated by the polymerase into VPg-pUpU. This acts as a nucleotide-peptide primer for the genomic RNA replication.

Its subcellular location is the virion. The protein resides in the host cytoplasm. It localises to the host cytoplasmic vesicle membrane. The protein localises to the host nucleus. It catalyses the reaction a ribonucleoside 5'-triphosphate + H2O = a ribonucleoside 5'-diphosphate + phosphate + H(+). The enzyme catalyses Selective cleavage of Tyr-|-Gly bond in the picornavirus polyprotein.. It carries out the reaction RNA(n) + a ribonucleoside 5'-triphosphate = RNA(n+1) + diphosphate. The catalysed reaction is Selective cleavage of Gln-|-Gly bond in the poliovirus polyprotein. In other picornavirus reactions Glu may be substituted for Gln, and Ser or Thr for Gly.. Its activity is regulated as follows. Replication or transcription is subject to high level of random mutations by the nucleotide analog ribavirin. Forms an icosahedral capsid of pseudo T=3 symmetry with capsid proteins VP2 and VP3. The capsid is 300 Angstroms in diameter, composed of 60 copies of each capsid protein and enclosing the viral positive strand RNA genome. Capsid protein VP1 mainly forms the vertices of the capsid. Capsid protein VP1 interacts with host integrin ITGAV/ITGB6 to provide virion attachment to target host cells. This attachment induces virion internalization. Tyrosine kinases are probably involved in the entry process. After binding to its receptor, the capsid undergoes conformational changes. Capsid protein VP1 N-terminus (that contains an amphipathic alpha-helix) and capsid protein VP4 are externalized. Together, they shape a pore in the host membrane through which viral genome is translocated to host cell cytoplasm. In terms of biological role, forms an icosahedral capsid of pseudo T=3 symmetry with capsid proteins VP2 and VP3. The capsid is 300 Angstroms in diameter, composed of 60 copies of each capsid protein and enclosing the viral positive strand RNA genome. Functionally, lies on the inner surface of the capsid shell. After binding to the host receptor, the capsid undergoes conformational changes. Capsid protein VP4 is released, Capsid protein VP1 N-terminus is externalized, and together, they shape a pore in the host membrane through which the viral genome is translocated into the host cell cytoplasm. Its function is as follows. Component of immature procapsids, which is cleaved into capsid proteins VP4 and VP2 after maturation. Allows the capsid to remain inactive before the maturation step. Cysteine protease that cleaves viral polyprotein and specific host proteins. It is responsible for the autocatalytic cleavage between the P1 and P2 regions, which is the first cleavage occurring in the polyprotein. Also cleaves the host translation initiation factor EIF4G1, in order to shut down the capped cellular mRNA translation. Inhibits the host nucleus-cytoplasm protein and RNA trafficking by cleaving host members of the nuclear pores. Counteracts stress granule formation probably by antagonizing its assembly or promoting its dissassembly. Cleaves and inhibits host IFIH1/MDA5, thereby inhibiting the type-I IFN production and the establishment of the antiviral state. Cleaves and inhibits host MAVS, thereby inhibiting the type-I IFN production and the establishment of the antiviral state. In terms of biological role, plays an essential role in the virus replication cycle by acting as a viroporin. Creates a pore in the host endoplasmic reticulum and as a consequence releases Ca2+ in the cytoplasm of infected cell. In turn, high levels of cytoplasmic calcium may trigger membrane trafficking and transport of viral ER-associated proteins to viroplasms, sites of viral genome replication. Functionally, induces and associates with structural rearrangements of intracellular membranes. Displays RNA-binding, nucleotide binding and NTPase activities. May play a role in virion morphogenesis and viral RNA encapsidation by interacting with the capsid protein VP3. Its function is as follows. Localizes the viral replication complex to the surface of membranous vesicles. Together with protein 3CD binds the Cis-Active RNA Element (CRE) which is involved in RNA synthesis initiation. Acts as a cofactor to stimulate the activity of 3D polymerase, maybe through a nucleid acid chaperone activity. Localizes the viral replication complex to the surface of membranous vesicles. It inhibits host cell endoplasmic reticulum-to-Golgi apparatus transport and causes the disassembly of the Golgi complex, possibly through GBF1 interaction. This would result in depletion of MHC, trail receptors and IFN receptors at the host cell surface. Plays an essential role in viral RNA replication by recruiting ACBD3 and PI4KB at the viral replication sites, thereby allowing the formation of the rearranged membranous structures where viral replication takes place. In terms of biological role, acts as a primer for viral RNA replication and remains covalently bound to viral genomic RNA. VPg is uridylylated prior to priming replication into VPg-pUpU. The oriI viral genomic sequence may act as a template for this. The VPg-pUpU is then used as primer on the genomic RNA poly(A) by the RNA-dependent RNA polymerase to replicate the viral genome. During genome replication, the VPg-RNA linkage is removed by the host TDP2, thereby accelerating replication. During the late stage of the replication cycle, host TDP2 is excluded from sites of viral RNA synthesis and encapsidation, allowing for the generation of progeny virions. Functionally, involved in the viral replication complex and viral polypeptide maturation. It exhibits protease activity with a specificity and catalytic efficiency that is different from protease 3C. Protein 3CD lacks polymerase activity. Protein 3CD binds to the 5'UTR of the viral genome. Its function is as follows. Replicates the viral genomic RNA on the surface of intracellular membranes. May form linear arrays of subunits that propagate along a strong head-to-tail interaction called interface-I. Covalently attaches UMP to a tyrosine of VPg, which is used to prime RNA synthesis. The positive stranded RNA genome is first replicated at virus induced membranous vesicles, creating a dsRNA genomic replication form. This dsRNA is then used as template to synthesize positive stranded RNA genomes. ss(+)RNA genomes are either translated, replicated or encapsidated. Major viral protease that mediates proteolytic processing of the polyprotein. Cleaves host EIF5B, contributing to host translation shutoff. Also cleaves host PABPC1, contributing to host translation shutoff. Cleaves host NLRP1, triggers host N-glycine-mediated degradation of the autoinhibitory NLRP1 N-terminal fragment. The protein is Genome polyprotein of Coxsackievirus A9 (strain Griggs).